A 949-amino-acid chain; its full sequence is Coiled-coil domain-containing protein 80 (949 aa).

The signal sequence occupies residues 1–27 (MTWKMGPHFTMLLAMWLVCGSASQSSA). 3 disordered regions span residues 24-79 (QSSA…RRKS), 289-360 (HVVQ…ATRA), and 408-609 (GPSV…SPRK). Gly residues predominate over residues 295–305 (NNGGGGGGSTG). The segment covering 308-328 (SDKRKEDPRRTQIHPTREPPR) has biased composition (basic and acidic residues). Low complexity predominate over residues 345–360 (RATTLPPAPVTTATRA). Over residues 419–429 (PRKEQQREKPQ) the composition is skewed to basic and acidic residues. Over residues 436-453 (KATNYGSFTATPPTTLWE) the composition is skewed to polar residues. The span at 463–477 (RFRDNRTDKREHGHQ) shows a compositional bias: basic and acidic residues. An N-linked (GlcNAc...) asparagine glycan is attached at Asn-467. A compositionally biased stretch (basic residues) spans 487–498 (KPIKGKLPKKKE). Composition is skewed to basic and acidic residues over residues 499-511 (KILSNEYEAKYDL), 534-548 (KESKKHEKPEKPEKE), and 556-581 (AKPDKLLRSEKQMKKAEKKSKQEKEK). Glycyl lysine isopeptide (Lys-Gly) (interchain with G-Cter in SUMO2) cross-links involve residues Lys-544 and Lys-547. Residues 559-587 (DKLLRSEKQMKKAEKKSKQEKEKTKKKKA) adopt a coiled-coil conformation.

The protein belongs to the CCDC80 family. In terms of assembly, binds to various extracellular matrix proteins. In terms of processing, phosphorylated. As to expression, isoform 2 is expressed in uterus, liver, lung, spleen, kidney, heart, bladder, skeletal muscle and brain (at protein level). Isoform 2 is expressed very low in mammary gland and intestine (at protein level). Isoform 2 is expressed in lactating mammary glands and mammary tumors (at protein level). Ubiquitous (isoform 1). Isoform 2 is expressed in ovary, uterus, mammary glands, liver, lung, spleen, kidney, heart, bladder, intestine, skeletal muscle and brain.

The protein resides in the secreted. The protein localises to the extracellular space. Its subcellular location is the extracellular matrix. Its function is as follows. Promotes cell adhesion and matrix assembly. In Rattus norvegicus (Rat), this protein is Coiled-coil domain-containing protein 80 (Ccdc80).